A 539-amino-acid chain; its full sequence is GMP synthase [glutamine-hydrolyzing] (539 aa).

A Glutamine amidotransferase type-1 domain is found at 4–202 (KVLILDFGSQ…VLEIAGAKPD (199 aa)). Cysteine 81 (nucleophile) is an active-site residue. Catalysis depends on residues histidine 176 and glutamate 178. Residues 203-395 (WVMRDHIDEA…LGLPHEMVYR (193 aa)) form the GMPS ATP-PPase domain. ATP is bound at residue 230-236 (SGGVDSS).

In terms of assembly, homodimer.

It carries out the reaction XMP + L-glutamine + ATP + H2O = GMP + L-glutamate + AMP + diphosphate + 2 H(+). The protein operates within purine metabolism; GMP biosynthesis; GMP from XMP (L-Gln route): step 1/1. In terms of biological role, catalyzes the synthesis of GMP from XMP. The protein is GMP synthase [glutamine-hydrolyzing] of Ralstonia pickettii (strain 12J).